A 281-amino-acid polypeptide reads, in one-letter code: 32 kDa heat shock protein (281 aa).

Positions 142 to 168 are enriched in acidic residues; that stretch reads EDDEEIDSDEEFGDSDQDEEDSDDEEI. Residues 142-281 form a disordered region; it reads EDDEEIDSDE…NENNKKKQKN (140 aa). Over residues 180-209 the composition is skewed to basic and acidic residues; it reads KITEISEVPESKKEKTPEPKKVPEPKKEQV. Low complexity predominate over residues 210–273; that stretch reads KQPTQPQQKK…NNKRPQNQNE (64 aa).

This chain is 32 kDa heat shock protein (hspC), found in Dictyostelium discoideum (Social amoeba).